A 472-amino-acid polypeptide reads, in one-letter code: MSDSGGFDSHPHVALIPSAGMGHLTPFLRLAASLVQHHCRVTLITTYPTVSLAETQHVSHFLSAYPQVTEKRFHLLPFDPNSANATDPFLLRWEAIRRSAHLLAPLLSPPLSALITDVTLISAVLPVTINLHLPNYVLFTASAKMFSLTASFPAIVASKSTSSGSVEFDDDFIEIPGLPPIPLSSVPPAVMDSKSLFATSFLENGNSFVKSNGVLINSFDALEADTLVALNGRRVVAGLPPVYAVGPLLPCEFEKRDDPSTSLILKWLDDQPEGSVVYVSFGSRLALSMEQTKELGDGLLSSGCRFLWVVKGKIVDKEDEESLKNVLGHELTEKIKDQGLVVKNWVDQDKVLSHRAVGGFVSHGGWNSLVEAARHGVPLLVWPHFGDQKINAEAVERAGLGMWVRSWGWGTELRAKGDEIGLKIKDLMANDFLREQAKRIEEEARKAIGVGGSSERTFKELIDKWKCNNNTH.

Catalysis depends on histidine 23, which acts as the Proton acceptor. Histidine 23 contacts an anthocyanidin. Aspartate 117 acts as the Charge relay in catalysis. Threonine 140 is a binding site for UDP-alpha-D-glucose. Positions 283 to 284 are UDP; it reads SR. Positions 346, 348, 363, 366, 367, 368, and 371 each coordinate UDP-alpha-D-glucose. Position 386 (glycine 386) interacts with an anthocyanidin. UDP-alpha-D-glucose is bound by residues aspartate 387 and glutamine 388.

Belongs to the UDP-glycosyltransferase family. In terms of tissue distribution, expressed at low levels in leaves, flowers and immature leaves.

It carries out the reaction a 3'-hydro-2'-hydroxy-beta-oxodihydrochalcone + UDP-alpha-D-glucose = a 3'-(beta-D-glucopyranosyl)-2'-hydroxy-beta-oxodihydrochalcone + UDP + H(+). Its function is as follows. UDP-glucose-dependent glucosyltransferase catalyzing the C-glucosylation of 2-hydroxyflavanones (2-hydroxylnaringenin and 2-hydroxypinocembrin) and phloretin. No activity with flavanones, flavones or flavonols. Exhibits C-glucosylation activity toward 2-phenyl-2',4',6'-trihydroxyacetophenone. Can use UDP-xylose as sugar donor, but catalytic efficiency is much lower toward UDP-xylose than toward UDP-glucose. This is UDP-glycosyltransferase 708G2 (UGT708G2) from Citrus unshiu (Satsuma mandarin).